A 389-amino-acid polypeptide reads, in one-letter code: Probable tRNA pseudouridine synthase D 1 (389 aa).

Asp63 serves as the catalytic Nucleophile. Residues 135–345 (GAPNYYDDQR…KYTKRPIISI (211 aa)) enclose the TRUD domain.

This sequence belongs to the pseudouridine synthase TruD family.

The catalysed reaction is uridine(13) in tRNA = pseudouridine(13) in tRNA. Its function is as follows. Could be responsible for synthesis of pseudouridine from uracil-13 in transfer RNAs. The sequence is that of Probable tRNA pseudouridine synthase D 1 (truD1) from Methanococcus maripaludis (strain DSM 14266 / JCM 13030 / NBRC 101832 / S2 / LL).